A 180-amino-acid chain; its full sequence is ATP-dependent protease subunit HslV (180 aa).

Residue Thr-2 is part of the active site. The Na(+) site is built by Gly-157, Cys-160, and Ser-163.

It belongs to the peptidase T1B family. HslV subfamily. In terms of assembly, a double ring-shaped homohexamer of HslV is capped on each side by a ring-shaped HslU homohexamer. The assembly of the HslU/HslV complex is dependent on binding of ATP.

The protein localises to the cytoplasm. It carries out the reaction ATP-dependent cleavage of peptide bonds with broad specificity.. Allosterically activated by HslU binding. Protease subunit of a proteasome-like degradation complex believed to be a general protein degrading machinery. This chain is ATP-dependent protease subunit HslV, found in Wigglesworthia glossinidia brevipalpis.